The chain runs to 351 residues: GDSL esterase/lipase At4g26790 (351 aa).

The N-terminal stretch at 1–25 (MQRNRVLAFLLLAAQLLVKIPETCA) is a signal peptide. S36 (nucleophile) is an active-site residue. The N-linked (GlcNAc...) asparagine glycan is linked to N118. Catalysis depends on residues D326 and H329.

It belongs to the 'GDSL' lipolytic enzyme family.

It is found in the secreted. The polypeptide is GDSL esterase/lipase At4g26790 (Arabidopsis thaliana (Mouse-ear cress)).